We begin with the raw amino-acid sequence, 566 residues long: Rho GTPase-activating protein gacH (566 aa).

4 disordered regions span residues methionine 1–threonine 56, leucine 65–lysine 84, serine 128–serine 168, and lysine 322–asparagine 366. The segment covering serine 14–serine 35 has biased composition (low complexity). Residues proline 36–threonine 56 are compositionally biased toward polar residues. Positions leucine 65 to asparagine 83 are enriched in low complexity. Residues aspartate 130 to asparagine 141 show a composition bias toward acidic residues. Residues asparagine 142–asparagine 160 are compositionally biased toward low complexity. A compositionally biased stretch (polar residues) spans lysine 327 to threonine 337. Low complexity predominate over residues serine 345–glutamine 356. Residues glycine 369–tyrosine 564 enclose the Rho-GAP domain.

It is found in the cytoplasm. Functionally, rho GTPase-activating protein involved in the signal transduction pathway. This Dictyostelium discoideum (Social amoeba) protein is Rho GTPase-activating protein gacH (gacH).